Reading from the N-terminus, the 190-residue chain is NADH-ubiquinone oxidoreductase 75 kDa subunit, mitochondrial (190 aa).

The protein belongs to the complex I 75 kDa subunit family. In terms of assembly, core subunit of respiratory chain NADH dehydrogenase (Complex I) which is composed of 45 different subunits. This is the largest subunit of complex I and it is a component of the iron-sulfur (IP) fragment of the enzyme. Complex I associates with ubiquinol-cytochrome reductase complex (Complex III) to form supercomplexes. Interacts with MDM2 and AKAP1. [2Fe-2S] cluster is required as a cofactor. The cofactor is [4Fe-4S] cluster.

It is found in the mitochondrion inner membrane. It carries out the reaction a ubiquinone + NADH + 5 H(+)(in) = a ubiquinol + NAD(+) + 4 H(+)(out). In terms of biological role, core subunit of the mitochondrial membrane respiratory chain NADH dehydrogenase (Complex I) which catalyzes electron transfer from NADH through the respiratory chain, using ubiquinone as an electron acceptor. Essential for catalysing the entry and efficient transfer of electrons within complex I. Plays a key role in the assembly and stability of complex I and participates in the association of complex I with ubiquinol-cytochrome reductase complex (Complex III) to form supercomplexes. The chain is NADH-ubiquinone oxidoreductase 75 kDa subunit, mitochondrial from Mesocricetus auratus (Golden hamster).